Here is a 246-residue protein sequence, read N- to C-terminus: Probable transcriptional regulatory protein CKO_01097 (246 aa).

The interval 1-20 is disordered; it reads MAGHSKWANTRHRKAAQDAK.

This sequence belongs to the TACO1 family.

It is found in the cytoplasm. This is Probable transcriptional regulatory protein CKO_01097 from Citrobacter koseri (strain ATCC BAA-895 / CDC 4225-83 / SGSC4696).